The primary structure comprises 248 residues: DNA polymerase sliding clamp (248 aa).

This sequence belongs to the PCNA family. In terms of assembly, homotrimer. The subunits circularize to form a toroid; DNA passes through its center. Replication factor C (RFC) is required to load the toroid on the DNA.

In terms of biological role, sliding clamp subunit that acts as a moving platform for DNA processing. Responsible for tethering the catalytic subunit of DNA polymerase and other proteins to DNA during high-speed replication. The chain is DNA polymerase sliding clamp from Cenarchaeum symbiosum (strain A).